The primary structure comprises 224 residues: Protein GrpE (224 aa).

A disordered region spans residues 27–77 (NQASEDIDQENQSEVVDDTTENEDASEEVYEEDTASEDGSKEKKSFFKKKE). A compositionally biased stretch (acidic residues) spans 31–62 (EDIDQENQSEVVDDTTENEDASEEVYEEDTAS).

This sequence belongs to the GrpE family. As to quaternary structure, homodimer.

Its subcellular location is the cytoplasm. Functionally, participates actively in the response to hyperosmotic and heat shock by preventing the aggregation of stress-denatured proteins, in association with DnaK and GrpE. It is the nucleotide exchange factor for DnaK and may function as a thermosensor. Unfolded proteins bind initially to DnaJ; upon interaction with the DnaJ-bound protein, DnaK hydrolyzes its bound ATP, resulting in the formation of a stable complex. GrpE releases ADP from DnaK; ATP binding to DnaK triggers the release of the substrate protein, thus completing the reaction cycle. Several rounds of ATP-dependent interactions between DnaJ, DnaK and GrpE are required for fully efficient folding. The chain is Protein GrpE from Lachnoclostridium phytofermentans (strain ATCC 700394 / DSM 18823 / ISDg) (Clostridium phytofermentans).